Here is a 511-residue protein sequence, read N- to C-terminus: GMP synthase [glutamine-hydrolyzing] (511 aa).

One can recognise a Glutamine amidotransferase type-1 domain in the interval proline 5 to threonine 195. The Nucleophile role is filled by cysteine 82. Residues histidine 169 and glutamate 171 contribute to the active site. A GMPS ATP-PPase domain is found at tryptophan 196 to arginine 386. Position 223 to 229 (serine 223 to serine 229) interacts with ATP.

In terms of assembly, homodimer.

It catalyses the reaction XMP + L-glutamine + ATP + H2O = GMP + L-glutamate + AMP + diphosphate + 2 H(+). Its pathway is purine metabolism; GMP biosynthesis; GMP from XMP (L-Gln route): step 1/1. In terms of biological role, catalyzes the synthesis of GMP from XMP. The sequence is that of GMP synthase [glutamine-hydrolyzing] from Aliarcobacter butzleri (strain RM4018) (Arcobacter butzleri).